The chain runs to 2241 residues: Large tegument protein deneddylase (2241 aa).

The deubiquitination activity stretch occupies residues 1-238; the sequence is MKVTQASCHQ…IDLTGVVRES (238 aa). Residues 4-226 form the Peptidase C76 domain; it reads TQASCHQGDI…AARLVSTYRD (223 aa). Catalysis depends on residues Cys24, Asp160, and His162. The tract at residues 239-314 is disordered; sequence ADTAATTTTA…STTSKTLATA (76 aa). Over residues 240 to 250 the composition is skewed to low complexity; the sequence is DTAATTTTAAP. The span at 251–268 shows a compositional bias: pro residues; sequence SLPPLPDPIVDPGCPPGV. Over residues 304 to 314 the composition is skewed to low complexity; that stretch reads PSTTSKTLATA. The interval 327–331 is interaction with inner tegument protein; it reads SSAVP. The tract at residues 1170–1229 is disordered; sequence RSSQQKMEEQLQETRQQMTETSERLDRSLRQDPGSSSVTRVPEKPFKGQELAGRITPPPA. Basic and acidic residues predominate over residues 1190–1199; that stretch reads TSERLDRSLR.

The protein belongs to the herpesviridae large tegument protein family. Interacts with host CUL1 and CUL4A; these interactions inhibit the E3 ligase activity of cullins. Interacts with inner tegument protein. Interacts with capsid vertex specific component CVC2. Interacts with the major capsid protein/MCP.

The protein localises to the virion tegument. It localises to the host cytoplasm. It is found in the host nucleus. The enzyme catalyses Thiol-dependent hydrolysis of ester, thioester, amide, peptide and isopeptide bonds formed by the C-terminal Gly of ubiquitin (a 76-residue protein attached to proteins as an intracellular targeting signal).. In terms of biological role, large tegument protein that plays multiple roles in the viral cycle. During viral entry, remains associated with the capsid while most of the tegument is detached and participates in the capsid transport toward the host nucleus. Plays a role in the routing of the capsid at the nuclear pore complex and subsequent uncoating. Within the host nucleus, acts as a deneddylase and promotes the degradation of nuclear CRLs (cullin-RING ubiquitin ligases) and thereby stabilizes nuclear CRL substrates, while cytoplasmic CRLs remain unaffected. These modifications prevent host cell cycle S-phase progression and create a favorable environment allowing efficient viral genome replication. Participates later in the secondary envelopment of capsids. Indeed, plays a linker role for the association of the outer viral tegument to the capsids together with the inner tegument protein. This Human cytomegalovirus (strain AD169) (HHV-5) protein is Large tegument protein deneddylase (UL48).